Consider the following 102-residue polypeptide: ATP-dependent Clp protease adapter protein ClpS (102 aa).

The protein belongs to the ClpS family. In terms of assembly, binds to the N-terminal domain of the chaperone ClpA.

Its function is as follows. Involved in the modulation of the specificity of the ClpAP-mediated ATP-dependent protein degradation. In Shewanella oneidensis (strain ATCC 700550 / JCM 31522 / CIP 106686 / LMG 19005 / NCIMB 14063 / MR-1), this protein is ATP-dependent Clp protease adapter protein ClpS.